Consider the following 359-residue polypeptide: Putative transposase y4uE (359 aa).

Disordered stretches follow at residues 1-31 (MGDGPNWRSLPEPSRFVGSDPSPPVPRAPGG) and 318-359 (HYAH…EEAA).

Belongs to the transposase 9 family.

In Sinorhizobium fredii (strain NBRC 101917 / NGR234), this protein is Putative transposase y4uE.